The following is a 187-amino-acid chain: Cell division protein SepF (187 aa).

Positions 13–74 (GLAEDDRYAE…PAPATTAQVT (62 aa)) are disordered. The span at 16-65 (EDDRYAEDTEPETTRPRVEAAREVRVESRHEARPEVRHEPRPEVSVERRP) shows a compositional bias: basic and acidic residues.

The protein belongs to the SepF family. As to quaternary structure, homodimer. Interacts with FtsZ.

It localises to the cytoplasm. Functionally, cell division protein that is part of the divisome complex and is recruited early to the Z-ring. Probably stimulates Z-ring formation, perhaps through the cross-linking of FtsZ protofilaments. Its function overlaps with FtsA. This chain is Cell division protein SepF, found in Kineococcus radiotolerans (strain ATCC BAA-149 / DSM 14245 / SRS30216).